A 296-amino-acid polypeptide reads, in one-letter code: Short-chain dehydrogenase/reductase ascJ (296 aa).

Residues I28, D66, and N93 each coordinate NADP(+). The Proton donor role is filled by S155. Positions 168, 172, and 205 each coordinate NADP(+). Y168 acts as the Proton acceptor in catalysis. K172 functions as the Lowers pKa of active site Tyr in the catalytic mechanism.

Belongs to the short-chain dehydrogenases/reductases (SDR) family.

The enzyme catalyses ascofuranol + A = ascofuranone + AH2. The protein operates within secondary metabolite biosynthesis; terpenoid biosynthesis. Short-chain dehydrogenase/reductase; part of the asc-2 gene cluster that mediates the biosynthesis of ascofuranone, a strong inhibitor of cyanide-insensitive alternative oxidases and a promising drug candidate against African trypanosomiasis. The first step in the pathway is performed by the non-reducing polyketide synthase ascC that produces orsellinic acid by condensing acetyl-CoA with 3 malonyl-CoA units. Orsellinic acid is then prenylated by the prenyltransferase ascA to yield ilicicolinic acid B. Ilicicolinic acid B is further reduced to ilicicolin B by the reductase ascB. The halogenase ascD then chlorinates ilicicolin B to produce ilicicolin A which is converted to ilicicolin A epoxide by the cytochrome P450 monooxygenase ascE that catalyzes stereoselective epoxidation of the terminal double bond of the prenyl group. Ilicicolin A epoxide is the last common precursor for the biosynthesis of ascofuranone and ascochlorin. The terpene cyclase ascF produces a monocyclic terpene, and the cyclization reaction is proposed to be initiated by protonation of the terminal epoxide of ilicicolin A epoxide to generate a monocyclic tertiarycation, which is followed by a series of hydride and methyl shifts with abstraction of proton, leading to the formation of the (14S,15R,19R)-trimethylcyclohexanone ring structure of ilicicolin C, which is finally reduced to ascochlorin by the dehydrogenase ascG. On the other hand, ilicicolin A epoxide is hydroxylated by the cytochrome P450 monooxygenase ascH, and the resultant product is cyclized by the terpene cyclase ascI to ascofuranol via protonation-initiated epoxide ring opening, which facilitates the 6-endo-tet cyclization to form the tetrahy-drofuran ring. Finally, ascofuranol is oxidized into ascofuranone by ascJ. The sequence is that of Short-chain dehydrogenase/reductase ascJ from Acremonium egyptiacum (Oospora egyptiaca).